Reading from the N-terminus, the 265-residue chain is 3-methyl-2-oxobutanoate hydroxymethyltransferase (265 aa).

Mg(2+)-binding residues include Asp-43 and Asp-82. 3-methyl-2-oxobutanoate-binding positions include 43 to 44 (DS), Asp-82, and Lys-111. A Mg(2+)-binding site is contributed by Glu-113. The active-site Proton acceptor is the Glu-180.

The protein belongs to the PanB family. In terms of assembly, homodecamer; pentamer of dimers. Mg(2+) is required as a cofactor.

It localises to the cytoplasm. The catalysed reaction is 3-methyl-2-oxobutanoate + (6R)-5,10-methylene-5,6,7,8-tetrahydrofolate + H2O = 2-dehydropantoate + (6S)-5,6,7,8-tetrahydrofolate. It functions in the pathway cofactor biosynthesis; (R)-pantothenate biosynthesis; (R)-pantoate from 3-methyl-2-oxobutanoate: step 1/2. In terms of biological role, catalyzes the reversible reaction in which hydroxymethyl group from 5,10-methylenetetrahydrofolate is transferred onto alpha-ketoisovalerate to form ketopantoate. This is 3-methyl-2-oxobutanoate hydroxymethyltransferase from Francisella tularensis subsp. novicida (strain U112).